The primary structure comprises 310 residues: Glycine-rich RNA-binding protein RZ1C (310 aa).

The RRM domain occupies 7–85 (SRIFVGGLSP…RVISVNRAEP (79 aa)). S15 carries the phosphoserine modification. The segment at 82–120 (RAEPKLGRDDGESHGSRGGRDSGYSIAGKGSFGGGGGGG) is disordered. Residues 83-101 (AEPKLGRDDGESHGSRGGR) show a composition bias toward basic and acidic residues. The span at 111–120 (GSFGGGGGGG) shows a compositional bias: gly residues. A CCHC-type zinc finger spans residues 128–143 (CFKCGRVGHWARDCPS). Positions 224–310 (RFAGGDRYSR…YPSSSTFDRY (87 aa)) are disordered. 2 stretches are compositionally biased toward basic and acidic residues: residues 226-236 (AGGDRYSRGSD) and 244-253 (DKARSFERDI). Residues 261–273 (RYGGGRAGGPIRG) are compositionally biased toward gly residues. S295 is modified (phosphoserine).

Expressed in roots, rosette and cauline leaves, stems, floral buds and flowers.

It is found in the nucleus. Its function is as follows. Binds RNA and DNA sequences non-specifically. May be involved in tolerance to cold stress. This is Glycine-rich RNA-binding protein RZ1C from Arabidopsis thaliana (Mouse-ear cress).